A 354-amino-acid chain; its full sequence is Type II restriction enzyme BanI (354 aa).

In terms of assembly, homodimer.

It carries out the reaction Endonucleolytic cleavage of DNA to give specific double-stranded fragments with terminal 5'-phosphates.. Functionally, a P subtype restriction enzyme that recognizes the double-stranded sequence 5'-GGYRCC-3' and cleaves after G-1. The chain is Type II restriction enzyme BanI (banIR) from Aneurinibacillus aneurinilyticus (Bacillus aneurinolyticus).